Here is a 179-residue protein sequence, read N- to C-terminus: MAVRGINKVILVGRLGKDPEVRYIPNGGAVANLQVATSESWRDKQTGEMREQTEWHRVVLFGKLAEVAGECLRKGAQVYIEGQLRTRSWEDNGITRYVTEILVKTTGTMQMLVRAAGAQTQPEEGQQFSGQPQPEPQAEAGTKKGGAKTKGRGRKAAQPEPQPQPPEGDDYGFSDDIPF.

The 105-residue stretch at 6-110 (INKVILVGRL…ILVKTTGTMQ (105 aa)) folds into the SSB domain. A DNA-binding region spans residues 55–61 (WHRVVLF). The interval 117–179 (GAQTQPEEGQ…DYGFSDDIPF (63 aa)) is disordered. The span at 118 to 132 (AQTQPEEGQQFSGQP) shows a compositional bias: polar residues. The span at 145-155 (GGAKTKGRGRK) shows a compositional bias: basic residues. Over residues 167 to 179 (EGDDYGFSDDIPF) the composition is skewed to acidic residues.

As to quaternary structure, homotetramer.

Its function is as follows. May contribute to the conjugative processing of DNA. It has a functional relationship with Psi (plasmid-mediated sos inhibition) proteins. This Escherichia coli (strain K12) protein is Plasmid-derived single-stranded DNA-binding protein (ssbF).